The primary structure comprises 109 residues: Nucleoid-associated protein HS_1309 (109 aa).

The protein belongs to the YbaB/EbfC family. In terms of assembly, homodimer.

It is found in the cytoplasm. The protein resides in the nucleoid. Binds to DNA and alters its conformation. May be involved in regulation of gene expression, nucleoid organization and DNA protection. The protein is Nucleoid-associated protein HS_1309 of Histophilus somni (strain 129Pt) (Haemophilus somnus).